We begin with the raw amino-acid sequence, 347 residues long: Dual specificity mitogen-activated protein kinase kinase 3 (347 aa).

Position 1 is an N-acetylmethionine (Met1). Positions 1-15 (MESPASSQPASMPQS) are enriched in low complexity. The disordered stretch occupies residues 1-46 (MESPASSQPASMPQSKGKSKRKKDLRISCMSKPPAPNPTPPRNLDS). Phosphoserine occurs at positions 3 and 15. The Protein kinase domain maps to 64–325 (LVTISELGRG…YLELMEHPFF (262 aa)). Residues 70–78 (LGRGAYGVV) and Lys93 each bind ATP. The active-site Proton acceptor is Asp190. Residue Ser218 is modified to Phosphoserine. Thr222 carries the post-translational modification Phosphothreonine.

This sequence belongs to the protein kinase superfamily. STE Ser/Thr protein kinase family. MAP kinase kinase subfamily. Component of a signaling complex containing at least AKAP13, PKN1, MAPK14, ZAK and MAP2K3. Within this complex, AKAP13 interacts directly with PKN1, which in turn recruits MAPK14, MAP2K3 and ZAK. Binds to DYRK1B/MIRK and increases its kinase activity. Part of a complex with MAP3K3, RAC1 and CCM2. Interacts with ARRB1. As to quaternary structure, (Microbial infection) Interacts with Yersinia YopJ. In terms of processing, autophosphorylated. Phosphorylation on Ser-218 and Thr-222 by MAP kinase kinase kinases positively regulates the kinase activity. Phosphorylated by TAOK2. (Microbial infection) Yersinia YopJ may acetylate Ser/Thr residues, preventing phosphorylation and activation, thus blocking the MAPK signaling pathway. Abundant expression is seen in the skeletal muscle. It is also widely expressed in other tissues.

It catalyses the reaction L-seryl-[protein] + ATP = O-phospho-L-seryl-[protein] + ADP + H(+). The catalysed reaction is L-threonyl-[protein] + ATP = O-phospho-L-threonyl-[protein] + ADP + H(+). It carries out the reaction L-tyrosyl-[protein] + ATP = O-phospho-L-tyrosyl-[protein] + ADP + H(+). With respect to regulation, activated by dual phosphorylation on Ser-218 and Thr-222. Functionally, dual specificity kinase. Is activated by cytokines and environmental stress in vivo. Catalyzes the concomitant phosphorylation of a threonine and a tyrosine residue in the MAP kinase p38. Part of a signaling cascade that begins with the activation of the adrenergic receptor ADRA1B and leads to the activation of MAPK14. This is Dual specificity mitogen-activated protein kinase kinase 3 (MAP2K3) from Homo sapiens (Human).